The following is an 89-amino-acid chain: Cell division topological specificity factor (89 aa).

This sequence belongs to the MinE family.

Functionally, prevents the cell division inhibition by proteins MinC and MinD at internal division sites while permitting inhibition at polar sites. This ensures cell division at the proper site by restricting the formation of a division septum at the midpoint of the long axis of the cell. The polypeptide is Cell division topological specificity factor (Pectobacterium atrosepticum (strain SCRI 1043 / ATCC BAA-672) (Erwinia carotovora subsp. atroseptica)).